The primary structure comprises 480 residues: Glutamyl-tRNA(Gln) amidotransferase subunit A (480 aa).

Active-site charge relay system residues include Lys74 and Ser149. The Acyl-ester intermediate role is filled by Ser173.

This sequence belongs to the amidase family. GatA subfamily. As to quaternary structure, heterotrimer of A, B and C subunits.

It carries out the reaction L-glutamyl-tRNA(Gln) + L-glutamine + ATP + H2O = L-glutaminyl-tRNA(Gln) + L-glutamate + ADP + phosphate + H(+). In terms of biological role, allows the formation of correctly charged Gln-tRNA(Gln) through the transamidation of misacylated Glu-tRNA(Gln) in organisms which lack glutaminyl-tRNA synthetase. The reaction takes place in the presence of glutamine and ATP through an activated gamma-phospho-Glu-tRNA(Gln). The chain is Glutamyl-tRNA(Gln) amidotransferase subunit A from Prochlorococcus marinus (strain MIT 9312).